The sequence spans 438 residues: 26S proteasome regulatory subunit 7 homolog (438 aa).

Over residues Met-1 to Asp-15 the composition is skewed to basic and acidic residues. The disordered stretch occupies residues Met-1–Asp-31. Position 90 is a phosphoserine (Ser-90). Gly-220–Thr-227 provides a ligand contact to ATP.

Belongs to the AAA ATPase family.

The protein localises to the cytoplasm. Its subcellular location is the nucleus. Functionally, the 26S proteasome is involved in the ATP-dependent degradation of ubiquitinated proteins. The regulatory (or ATPase) complex confers ATP dependency and substrate specificity to the 26S complex. The polypeptide is 26S proteasome regulatory subunit 7 homolog (rpt1) (Schizosaccharomyces pombe (strain 972 / ATCC 24843) (Fission yeast)).